We begin with the raw amino-acid sequence, 526 residues long: Glutamate--cysteine ligase (526 aa).

It belongs to the glutamate--cysteine ligase type 1 family. Type 1 subfamily.

It carries out the reaction L-cysteine + L-glutamate + ATP = gamma-L-glutamyl-L-cysteine + ADP + phosphate + H(+). It functions in the pathway sulfur metabolism; glutathione biosynthesis; glutathione from L-cysteine and L-glutamate: step 1/2. The chain is Glutamate--cysteine ligase from Shewanella amazonensis (strain ATCC BAA-1098 / SB2B).